The sequence spans 261 residues: Uridine-cytidine kinase 2 (261 aa).

The tract at residues methionine 1–valine 24 is disordered. Glycine 26–serine 34 serves as a coordination point for ATP. Residues aspartate 83, tyrosine 111, histidine 116, arginine 165, arginine 175, and glutamine 183 each coordinate substrate. Residue aspartate 212 coordinates ATP. Positions asparagine 238–proline 247 are enriched in polar residues. The tract at residues asparagine 238 to histidine 261 is disordered.

It belongs to the uridine kinase family. Homotetramer.

It catalyses the reaction uridine + ATP = UMP + ADP + H(+). The enzyme catalyses cytidine + ATP = CMP + ADP + H(+). The protein operates within pyrimidine metabolism; CTP biosynthesis via salvage pathway; CTP from cytidine: step 1/3. It participates in pyrimidine metabolism; UMP biosynthesis via salvage pathway; UMP from uridine: step 1/1. In terms of biological role, phosphorylates uridine and cytidine to uridine monophosphate and cytidine monophosphate. Does not phosphorylate deoxyribonucleosides or purine ribonucleosides. Can use ATP or GTP as a phosphate donor. This is Uridine-cytidine kinase 2 (uck2) from Xenopus tropicalis (Western clawed frog).